The chain runs to 74 residues: Mitochondrial import receptor subunit TOM6 homolog (74 aa).

Positions 1-20 are enriched in low complexity; that stretch reads MASSGVTVSAAGSASEASEV. A disordered region spans residues 1 to 21; the sequence is MASSGVTVSAAGSASEASEVP. Residue Ala2 is modified to N-acetylalanine.

This sequence belongs to the Tom6 family. In terms of assembly, forms part of the preprotein translocase complex of the outer mitochondrial membrane (TOM complex) which consists of at least 7 different proteins (TOMM5, TOMM6, TOMM7, TOMM20, TOMM22, TOMM40 and TOMM70).

The protein resides in the mitochondrion outer membrane. This chain is Mitochondrial import receptor subunit TOM6 homolog (Tomm6), found in Mus musculus (Mouse).